A 433-amino-acid chain; its full sequence is Type I acyl-CoA thioesterase mpaH' (433 aa).

Residues 58–246 (HGVGLPKELY…IKALFGTTAD (189 aa)) are abhydrolase domain. A substrate-binding site is contributed by V60. The Nucleophile role is filled by S139. F140 contributes to the substrate binding site. Active-site residues include D163 and H365.

The protein belongs to the AB hydrolase superfamily. MpaH hydrolase family. In terms of assembly, homodimer.

The protein resides in the peroxisome matrix. It carries out the reaction mycophenolyl-CoA + H2O = mycophenolate + CoA + H(+). It participates in secondary metabolite biosynthesis; terpenoid biosynthesis. In terms of biological role, type I acyl-CoA thioesterase; part of the gene cluster that mediates the biosynthesis of mycophenolic acid (MPA), the first isolated antibiotic natural product in the world obtained from a culture of Penicillium brevicompactum in 1893. MpaH' acts as a peroxisomal acyl-CoA hydrolase that converts MPA-CoA into the final product MPA. The first step of the pathway is the synthesis of 5-methylorsellinic acid (5MOA) by the cytosolic polyketide synthase mpaC. 5MOA is then converted to the phthalide compound 5,7-dihydroxy-4,6-dimethylphthalide (DHMP) by the endoplasmic reticulum-bound cytochrome P450 monooxygenase mpaDE. MpaDE first catalyzes hydroxylation of 5-MOA to 4,6-dihydroxy-2-(hydroxymethyl)-3-methylbenzoic acid (DHMB). MpaDE then acts as a lactone synthase that catalyzes the ring closure to convert DHMB into DHMP. The next step is the prenylation of DHMP by the Golgi apparatus-associated prenyltransferase mpaA to yield farnesyl-DHMP (FDHMP). The ER-bound oxygenase mpaB then mediates the oxidative cleavage the C19-C20 double bond in FDHMP to yield FDHMP-3C via a mycophenolic aldehyde intermediate. The O-methyltransferase mpaG catalyzes the methylation of FDHMP-3C to yield MFDHMP-3C. After the cytosolic methylation of FDHMP-3C, MFDHMP-3C enters into peroxisomes probably via free diffusion due to its low molecular weight. Upon a peroxisomal CoA ligation reaction, catalyzed by a beta-oxidation component enzyme acyl-CoA ligase ACL891, MFDHMP-3C-CoA would then be restricted to peroxisomes for the following beta-oxidation pathway steps. The peroxisomal beta-oxidation machinery than converts MFDHMP-3C-CoA into MPA_CoA, via a beta-oxidation chain-shortening process. Finally mpaH acts as a peroxisomal acyl-CoA hydrolase with high substrate specificity toward MPA-CoA to release the final product MPA. The sequence is that of Type I acyl-CoA thioesterase mpaH' from Penicillium brevicompactum.